A 134-amino-acid polypeptide reads, in one-letter code: Phosphoribosyl-ATP pyrophosphatase 2 (134 aa).

It belongs to the PRA-PH family.

The protein resides in the cytoplasm. The catalysed reaction is 1-(5-phospho-beta-D-ribosyl)-ATP + H2O = 1-(5-phospho-beta-D-ribosyl)-5'-AMP + diphosphate + H(+). It functions in the pathway amino-acid biosynthesis; L-histidine biosynthesis; L-histidine from 5-phospho-alpha-D-ribose 1-diphosphate: step 2/9. This chain is Phosphoribosyl-ATP pyrophosphatase 2 (hisE2), found in Bradyrhizobium diazoefficiens (strain JCM 10833 / BCRC 13528 / IAM 13628 / NBRC 14792 / USDA 110).